Consider the following 186-residue polypeptide: Methylamine dehydrogenase light chain (186 aa).

The segment at residues 1–57 (MLGKSQFDDLFEKMSRKVAGHTSRRGFIGRVGTAVAGVALVPLLPVDRRGRVSRANA) is a signal peptide (tat-type signal). Cystine bridges form between C78-C143, C84-C116, C91-C176, C93-C141, C101-C132, and C133-C164. W112 is subject to Tryptophylquinone. The segment at residues 112–163 (WVASCYNPTDKQSYLISYRDCCGANVSGRCACLNTEGELPVYRPEFGNDIIW) is a cross-link (tryptophan tryptophylquinone (Trp-Trp)).

This sequence belongs to the aromatic amine dehydrogenase light chain family. As to quaternary structure, heterotetramer of two light and two heavy chains. Tryptophan tryptophylquinone residue serves as cofactor. In terms of processing, predicted to be exported by the Tat system. The position of the signal peptide cleavage has been experimentally proven. Post-translationally, tryptophan tryptophylquinone (TTQ) is formed by oxidation of the indole ring of a tryptophan to form tryptophylquinone followed by covalent cross-linking with another tryptophan residue.

Its subcellular location is the periplasm. The enzyme catalyses 2 oxidized [amicyanin] + methylamine + H2O = 2 reduced [amicyanin] + formaldehyde + NH4(+) + 2 H(+). Its pathway is one-carbon metabolism; methylamine degradation; formaldehyde from methylamine: step 1/1. In terms of biological role, methylamine dehydrogenase carries out the oxidation of methylamine. Electrons are passed from methylamine dehydrogenase to amicyanin. The protein is Methylamine dehydrogenase light chain (mauA) of Methylorubrum extorquens (strain ATCC 14718 / DSM 1338 / JCM 2805 / NCIMB 9133 / AM1) (Methylobacterium extorquens).